The chain runs to 260 residues: MSTNNSVLVLKVGGALLQCEMGMARLMDTAAAMLANGQQVLMVHGGGCLVDEQLAANGMETVKLEGLRVTPPEQMPIIAGALAGTSNKILQGAATKAGIVSVGMSLADGNTVSAKIKDERLGLVGEVTPKDGAYLKFILAQGWMPICSSIAMMDDGQMLNVNADQAATALAKLVGGKLVLLSDVSGVLDGKGQLIHSLNGKQIADLVKQGVIEKGMKVKVEAALEVAQWMGQAVQVASWRDASQLIALAKGEAVGTQIQP.

Residues 46 to 47, R68, and N160 contribute to the substrate site; that span reads GG.

This sequence belongs to the acetylglutamate kinase family. ArgB subfamily.

The protein localises to the cytoplasm. The enzyme catalyses N-acetyl-L-glutamate + ATP = N-acetyl-L-glutamyl 5-phosphate + ADP. Its pathway is amino-acid biosynthesis; L-arginine biosynthesis; N(2)-acetyl-L-ornithine from L-glutamate: step 2/4. In terms of biological role, catalyzes the ATP-dependent phosphorylation of N-acetyl-L-glutamate. The chain is Acetylglutamate kinase from Shewanella baltica (strain OS223).